The following is a 376-amino-acid chain: Sulfate/thiosulfate import ATP-binding protein CysA 1 (376 aa).

Positions 3–237 (IRLTNISKKF…PNSRFVFDFL (235 aa)) constitute an ABC transporter domain. Residue 35–42 (GPSGSGKT) coordinates ATP.

Belongs to the ABC transporter superfamily. Sulfate/tungstate importer (TC 3.A.1.6) family. As to quaternary structure, the complex is composed of two ATP-binding proteins (CysA), two transmembrane proteins (CysT and CysW) and a solute-binding protein (CysP).

Its subcellular location is the cell inner membrane. The catalysed reaction is sulfate(out) + ATP + H2O = sulfate(in) + ADP + phosphate + H(+). It catalyses the reaction thiosulfate(out) + ATP + H2O = thiosulfate(in) + ADP + phosphate + H(+). Its function is as follows. Part of the ABC transporter complex CysAWTP involved in sulfate/thiosulfate import. Responsible for energy coupling to the transport system. The polypeptide is Sulfate/thiosulfate import ATP-binding protein CysA 1 (Shewanella oneidensis (strain ATCC 700550 / JCM 31522 / CIP 106686 / LMG 19005 / NCIMB 14063 / MR-1)).